The chain runs to 274 residues: 2-dehydro-3-deoxyphosphooctonate aldolase (274 aa).

The protein belongs to the KdsA family.

It is found in the cytoplasm. It catalyses the reaction D-arabinose 5-phosphate + phosphoenolpyruvate + H2O = 3-deoxy-alpha-D-manno-2-octulosonate-8-phosphate + phosphate. Its pathway is carbohydrate biosynthesis; 3-deoxy-D-manno-octulosonate biosynthesis; 3-deoxy-D-manno-octulosonate from D-ribulose 5-phosphate: step 2/3. It functions in the pathway bacterial outer membrane biogenesis; lipopolysaccharide biosynthesis. In Rickettsia peacockii (strain Rustic), this protein is 2-dehydro-3-deoxyphosphooctonate aldolase.